A 316-amino-acid polypeptide reads, in one-letter code: Lipooligosaccharide heptosyltransferase 2 (316 aa).

This sequence belongs to the glycosyltransferase 9 family.

It catalyses the reaction an L-alpha-D-Hep-(1-&gt;5)-[alpha-Kdo-(2-&gt;4)]-alpha-Kdo-(2-&gt;6)-lipid A + ADP-L-glycero-beta-D-manno-heptose = an L-alpha-D-Hep-(1-&gt;3)-L-alpha-D-Hep-(1-&gt;5)-[alpha-Kdo-(2-&gt;4)]-alpha-Kdo-(2-&gt;6)-lipid A + ADP + H(+). It functions in the pathway bacterial outer membrane biogenesis; LOS core biosynthesis. In terms of biological role, glycosyltransferase involved in the biosynthesis of the core oligosaccharide region of lipooligosaccharide (LOS). Catalyzes the addition of the second heptose unit to the heptosyl-Kdo2-lipid A module. The sequence is that of Lipooligosaccharide heptosyltransferase 2 from Campylobacter jejuni subsp. jejuni serotype O:6 (strain 81116 / NCTC 11828).